The following is a 330-amino-acid chain: Lipoyl synthase (330 aa).

Residues Cys-77, Cys-82, Cys-88, Cys-103, Cys-107, Cys-110, and Ser-317 each coordinate [4Fe-4S] cluster. One can recognise a Radical SAM core domain in the interval 89 to 306 (FNHGTATFMI…RSEAERMGFE (218 aa)).

The protein belongs to the radical SAM superfamily. Lipoyl synthase family. Requires [4Fe-4S] cluster as cofactor.

It is found in the cytoplasm. The catalysed reaction is [[Fe-S] cluster scaffold protein carrying a second [4Fe-4S](2+) cluster] + N(6)-octanoyl-L-lysyl-[protein] + 2 oxidized [2Fe-2S]-[ferredoxin] + 2 S-adenosyl-L-methionine + 4 H(+) = [[Fe-S] cluster scaffold protein] + N(6)-[(R)-dihydrolipoyl]-L-lysyl-[protein] + 4 Fe(3+) + 2 hydrogen sulfide + 2 5'-deoxyadenosine + 2 L-methionine + 2 reduced [2Fe-2S]-[ferredoxin]. It functions in the pathway protein modification; protein lipoylation via endogenous pathway; protein N(6)-(lipoyl)lysine from octanoyl-[acyl-carrier-protein]: step 2/2. Catalyzes the radical-mediated insertion of two sulfur atoms into the C-6 and C-8 positions of the octanoyl moiety bound to the lipoyl domains of lipoate-dependent enzymes, thereby converting the octanoylated domains into lipoylated derivatives. This is Lipoyl synthase from Actinobacillus pleuropneumoniae serotype 3 (strain JL03).